Consider the following 410-residue polypeptide: FBD-associated F-box protein At5g38590 (410 aa).

One can recognise an F-box domain in the interval 1–47 (MDKINGLPDDLLVKILSYVPTDIAVSTSILSKRWEFLWMWLPNLDYT). The 51-residue stretch at 335–385 (GWNQPSSVPECLLSSLQIFKWPQYLGRPEDRDIAVYILKNARHLKKTTILA) folds into the FBD domain.

This chain is FBD-associated F-box protein At5g38590, found in Arabidopsis thaliana (Mouse-ear cress).